The sequence spans 275 residues: Large ribosomal subunit protein uL2 (275 aa).

Disordered stretches follow at residues 38–59 (KKHA…GGHK) and 222–275 (GSAM…RKQK). Composition is skewed to basic residues over residues 39–59 (KHAG…GGHK) and 254–275 (MGKK…RKQK).

This sequence belongs to the universal ribosomal protein uL2 family. In terms of assembly, part of the 50S ribosomal subunit. Forms a bridge to the 30S subunit in the 70S ribosome.

Its function is as follows. One of the primary rRNA binding proteins. Required for association of the 30S and 50S subunits to form the 70S ribosome, for tRNA binding and peptide bond formation. It has been suggested to have peptidyltransferase activity; this is somewhat controversial. Makes several contacts with the 16S rRNA in the 70S ribosome. This is Large ribosomal subunit protein uL2 from Herpetosiphon aurantiacus (strain ATCC 23779 / DSM 785 / 114-95).